Reading from the N-terminus, the 1588-residue chain is RB1-inducible coiled-coil protein 1 (1588 aa).

Phosphoserine occurs at positions 222, 229, and 237. Position 238 is a phosphothreonine (T238). S243, S253, S257, and S261 each carry phosphoserine. Positions 565–568 match the Nuclear localization signal motif; it reads KPRK. Phosphoserine is present on residues S623, S646, S649, S652, S733, S1087, S1366, and S1478. The tract at residues 638–674 is disordered; sequence QKVSTSQASPQSAASPRIESTTGITTTTSPKTPPPLT. A compositionally biased stretch (low complexity) spans 643-667; the sequence is SQASPQSAASPRIESTTGITTTTSP. The FFAT motif lies at 730–736; the sequence is DFMSAVN. Coiled coils occupy residues 858–1393 and 1440–1479; these read LKEK…TSSF and SVQENMLSEEKQRIMLLERTLQLKEEENKRLNQRLMSQSL.

Part of a complex containing ATG13/KIAA0652, ULK1 and RB1CC1. This complex associates with ATG101. Interacts with PTK2/FAK1 and PTK2B/PYK2. Interacts with GABARAP and GABARAPL1. Interacts with ATG16L1; the interaction is required for ULK1 complex-dependent autophagy. Interacts with RNF111, SKI and SMAD7. Interacts with COP1 in the cytoplasm of proliferating cells in response to UV stimulation. Interacts with TP53. Interacts with C9orf72. Interacts with WDR45B. Interacts with ATG13; this interaction is increased in the absence of TMEM39A. Interacts with WIPI2. Interacts with TAX1BP1. Interacts (via phosphorylated FFAT motif) with MOSPD2. Phosphorylation at Ser-733 of the FFAT motif activates interaction with MOSPD2. Expressed abundantly in heart and testis, and moderately in kidney, liver and skeletal muscles. Very low expression levels in lung and spleen. Colocalizes with RB1 in various tissues.

It is found in the nucleus. The protein localises to the cytoplasm. Its subcellular location is the cytosol. The protein resides in the preautophagosomal structure. It localises to the lysosome. In terms of biological role, involved in autophagy. Regulates early events but also late events of autophagosome formation through direct interaction with Atg16L1. Required for the formation of the autophagosome-like double-membrane structure that surrounds the Salmonella-containing vacuole (SCV) during S.typhimurium infection and subsequent xenophagy. Involved in repair of DNA damage caused by ionizing radiation, which subsequently improves cell survival by decreasing apoptosis. Inhibits PTK2/FAK1 and PTK2B/PYK2 kinase activity, affecting their downstream signaling pathways. Plays a role as a modulator of TGF-beta-signaling by restricting substrate specificity of RNF111. Functions as a DNA-binding transcription factor. Is a potent regulator of the RB1 pathway through induction of RB1 expression. Plays a crucial role in muscular differentiation. Plays an indispensable role in fetal hematopoiesis and in the regulation of neuronal homeostasis. The protein is RB1-inducible coiled-coil protein 1 of Mus musculus (Mouse).